The chain runs to 179 residues: Stathmin-2 (179 aa).

Residues 1–26 are membrane attachment; the sequence is MAKTAMAYKEKMKELSMLSLICSCFY. Serine 16 is subject to Phosphoserine. 2 S-palmitoyl cysteine lipidation sites follow: cysteine 22 and cysteine 24. An SLD domain is found at 38–179; sequence DDMEVKQINK…NKELQVELSG (142 aa). Residues 39–96 are regulatory/phosphorylation domain; sequence DMEVKQINKRASGQAFELILKPPSPISEAPRTLASPKKKDLSLEEIQKKLEAAEGRRK. Serine 50 is modified (phosphoserine). Residues serine 62 and serine 73 each carry the phosphoserine; by MAPK8 modification. Positions 75–179 form a coiled coil; the sequence is KKKDLSLEEI…NKELQVELSG (105 aa). Phosphoserine is present on residues serine 80 and serine 97.

It belongs to the stathmin family. As to quaternary structure, interacts with ITM2C. Interacts with MAPK8. Interacts with KIFBP. Interacts (via the N-terminal region) with CIB1 (via C-terminal region); the interaction is direct, occurs in a calcium-dependent manner and attenuates the neurite outgrowth inhibition of STMN2. In terms of processing, sumoylated. Post-translationally, phosphorylated by MAPK9 and MAPK10 in the developing brain cortex. Phosphorylated mostly by MAPK8. N-terminal palmitoylation promotes specific anchoring to the cytosolic leaflet of Golgi membranes and subsequent vesicular trafficking along dendrites and axons. Neuronal Stathmins are substrates for palmitoyltransferases ZDHHC3, ZDHHC7 and ZDHHC15. In terms of tissue distribution, expressed in neurons (at protein level). Present in growth cones and abundant in developing neurons.

It is found in the cytoplasm. It localises to the perinuclear region. The protein resides in the cell projection. The protein localises to the growth cone. Its subcellular location is the axon. It is found in the membrane. It localises to the golgi apparatus. The protein resides in the endosome. The protein localises to the lamellipodium. Regulator of microtubule stability. When phosphorylated by MAPK8, stabilizes microtubules and consequently controls neurite length in cortical neurons. In the developing brain, negatively regulates the rate of exit from multipolar stage and retards radial migration from the ventricular zone. This chain is Stathmin-2 (Stmn2), found in Rattus norvegicus (Rat).